We begin with the raw amino-acid sequence, 54 residues long: Relaxin (54 aa).

Glutamine 1 carries the post-translational modification Pyrrolidone carboxylic acid. 3 cysteine pairs are disulfide-bonded: cysteine 13-cysteine 41, cysteine 25-cysteine 54, and cysteine 40-cysteine 45.

It belongs to the insulin family. Heterodimer of a B chain and an A chain linked by two disulfide bonds.

Its subcellular location is the secreted. In terms of biological role, the function of relaxin in an oviparous species is not yet known. In Squalus acanthias (Spiny dogfish), this protein is Relaxin.